The sequence spans 296 residues: Cytidine deaminase (296 aa).

CMP/dCMP-type deaminase domains lie at 47–167 (TEAE…FGPK) and 186–296 (DSSD…VDPV). 88–90 (NLE) contacts substrate. His101 lines the Zn(2+) pocket. The active-site Proton donor is Glu103. Zn(2+)-binding residues include Cys128 and Cys131.

Belongs to the cytidine and deoxycytidylate deaminase family. Homodimer. The cofactor is Zn(2+).

The enzyme catalyses cytidine + H2O + H(+) = uridine + NH4(+). The catalysed reaction is 2'-deoxycytidine + H2O + H(+) = 2'-deoxyuridine + NH4(+). This enzyme scavenges exogenous and endogenous cytidine and 2'-deoxycytidine for UMP synthesis. The protein is Cytidine deaminase of Shewanella sp. (strain MR-7).